The chain runs to 391 residues: Ferrochelatase (391 aa).

Fe cation contacts are provided by His-196 and Glu-281.

This sequence belongs to the ferrochelatase family.

Its subcellular location is the cytoplasm. It catalyses the reaction heme b + 2 H(+) = protoporphyrin IX + Fe(2+). The protein operates within porphyrin-containing compound metabolism; protoheme biosynthesis; protoheme from protoporphyrin-IX: step 1/1. Catalyzes the ferrous insertion into protoporphyrin IX. In Parasynechococcus marenigrum (strain WH8102), this protein is Ferrochelatase.